Reading from the N-terminus, the 722-residue chain is Phenylalanine ammonia-lyase lenB (722 aa).

Tyr-83 acts as the Proton donor/acceptor in catalysis. Residues 117–136 (LPTDRSSSRPSSRYPHGLRS) form a disordered region. The 5-imidazolinone (Ala-Gly) cross-link spans 190–192 (ASG). Ser-191 is subject to 2,3-didehydroalanine (Ser). Positions 247, 334, 340, 370, 441, 469, and 472 each coordinate (E)-cinnamate.

This sequence belongs to the PAL/histidase family. In terms of processing, contains an active site 4-methylidene-imidazol-5-one (MIO), which is formed autocatalytically by cyclization and dehydration of residues Ala-Ser-Gly.

It carries out the reaction L-phenylalanine = (E)-cinnamate + NH4(+). It functions in the pathway alkaloid biosynthesis. Functionally, phenylalanine ammonia-lyase; part of the gene cluster that mediates the biosynthesis of the ergot alkaloids lentopeptins A and B. Within the pathway, lenB provides the cinnamic acid starter unit for the synthesis of the N-acyldiketopiperazine intermediate by the NRPS lenA. Cinnamic acid is condensed with the Ala-Val-Ala peptide chain by lenA which leads to the N-acyldiketopiperazine intermediate which in turn is converted into lentopeptins A and B by the cytochrome P450 monooxygenase lenC. The chain is Phenylalanine ammonia-lyase lenB from Aspergillus lentulus.